Consider the following 767-residue polypeptide: Serine/threonine-protein kinase DCLK2 (767 aa).

The disordered stretch occupies residues 1-44 (MASTRSIELEHFEERDKRPRPGSRRGAPSSSGGSSISGPKGNGL). Residues 7–19 (IELEHFEERDKRP) show a composition bias toward basic and acidic residues. Over residues 24-43 (RRGAPSSSGGSSISGPKGNG) the composition is skewed to low complexity. A Phosphothreonine modification is found at T61. 2 Doublecortin domains span residues 72–158 (KKAR…VDYT) and 196–279 (KLVT…AQDD). Residues 301 to 311 (KYSGSRSPGLS) are compositionally biased toward low complexity. Positions 301 to 391 (KYSGSRSPGL…GPELDRCMSP (91 aa)) are disordered. Residues 327-338 (SAYSTAKSPVNG) are compositionally biased toward polar residues. Residues 339–362 (TPSSQLSTPKSTKSSSSSPTSPGS) show a composition bias toward low complexity. Residues 369–380 (ISAQGRSSSNVN) show a composition bias toward polar residues. The residue at position 377 (S377) is a Phosphoserine. The Protein kinase domain maps to 409–666 (YRIGKVIGDG…AGEILSHPWV (258 aa)). ATP is bound by residues 415–423 (IGDGNFAVV) and K438. D530 (proton acceptor) is an active-site residue. The residue at position 662 (S662) is a Phosphoserine. Position 681 is a phosphothreonine (T681). A compositionally biased stretch (basic and acidic residues) spans 721–734 (HCRDSSKSSREQTS). The tract at residues 721–767 (HCRDSSKSSREQTSAREAPPPPESPRPPGPPATSGCDPAGTWRRHRD) is disordered. A compositionally biased stretch (pro residues) spans 738 to 751 (APPPPESPRPPGPP).

This sequence belongs to the protein kinase superfamily. CAMK Ser/Thr protein kinase family. CaMK subfamily. In terms of assembly, interacts with MAPK8IP1/JIP-1, MAPK8IP2/JIP-2, MAPK9/JNK2, PPP1R9B/NEURABIN-2 and actin. Binds to and stabilizes microtubules; binding affinity is strongly reduced by autophosphorylation. Autophosphorylated.

The protein localises to the cytoplasm. Its subcellular location is the cytoskeleton. It catalyses the reaction L-seryl-[protein] + ATP = O-phospho-L-seryl-[protein] + ADP + H(+). The catalysed reaction is L-threonyl-[protein] + ATP = O-phospho-L-threonyl-[protein] + ADP + H(+). Functionally, protein kinase with a significantly reduced Ca(2+)+/CAM affinity and dependence compared to other members of the CaMK family. May play a role in the down-regulation of CRE-dependent gene activation probably by phosphorylation of the CREB coactivator CRTC2/TORC2 and the resulting retention of TORC2 in the cytoplasm. This Rattus norvegicus (Rat) protein is Serine/threonine-protein kinase DCLK2 (Dclk2).